The following is a 708-amino-acid chain: Ion-translocating oxidoreductase complex subunit C (708 aa).

4Fe-4S ferredoxin-type domains are found at residues 369-397 (GEPQEEQSCIRCSACADACPADLLPQQLY) and 407-436 (KATTHNIADCIECGACAWVCPSNIPLVQYF). [4Fe-4S] cluster is bound by residues cysteine 377, cysteine 380, cysteine 383, cysteine 387, cysteine 416, cysteine 419, cysteine 422, and cysteine 426. Positions 663–684 (KARKLEQQQTNAEPEEQVDPRK) are disordered.

Belongs to the 4Fe4S bacterial-type ferredoxin family. RnfC subfamily. In terms of assembly, the complex is composed of six subunits: RsxA, RsxB, RsxC, RsxD, RsxE and RsxG. The cofactor is [4Fe-4S] cluster.

It localises to the cell inner membrane. In terms of biological role, part of a membrane-bound complex that couples electron transfer with translocation of ions across the membrane. Required to maintain the reduced state of SoxR. In Shigella boydii serotype 18 (strain CDC 3083-94 / BS512), this protein is Ion-translocating oxidoreductase complex subunit C.